The following is a 639-amino-acid chain: Centromere protein T (639 aa).

Disordered regions lie at residues 1–64 (MDGR…RPNA), 266–294 (QLSD…GLVS), 307–451 (SEKD…ERGT), 458–477 (AAEE…ESEE), and 494–534 (QPVL…TREP). Low complexity predominate over residues 12–23 (RAAPTPRVAVRS). The flexible stalk domain stretch occupies residues 80-500 (IIQNQPQVSP…YRPQPVLSPP (421 aa)). Polar residues predominate over residues 267-281 (LSDSKTSAQRSNTSY). Composition is skewed to basic and acidic residues over residues 307–319 (SEKD…EHVD), 329–338 (QGEEEQDHSQ), 356–371 (TEHH…SEKK), and 432–449 (PGAK…EIER). Positions 458 to 469 (AAEEEATDDESD) are enriched in acidic residues.

This sequence belongs to the CENP-T/CNN1 family. In terms of assembly, component of the CENPA-CAD complex, composed of CENPI, CENPK, CENPL, CENPO, CENPP, CENPQ, CENPR and CENPS. The CENPA-CAD complex is probably recruited on centromeres by the CENPA-NAC complex, at least composed of CENPA, CENPC, CENPH, CENPM, CENPN, CENPT and CENPU. Identified in a centromeric complex containing histones H2A, H2B, H3 and H4, and at least CENPA, CENPB, CENPC, CENPT, CENPN, HJURP, SUPT16H, SSRP1 and RSF1. Interacts (via N-terminus) with the NDC80 complex. Heterodimer with CENPW; this dimer coassembles with CENPS-CENPX heterodimers at centromeres to form the tetrameric CENP-T-W-S-X complex.

Its subcellular location is the nucleus. It is found in the chromosome. It localises to the centromere. The protein localises to the kinetochore. Functionally, component of the CENPA-NAC (nucleosome-associated) complex, a complex that plays a central role in assembly of kinetochore proteins, mitotic progression and chromosome segregation. The CENPA-NAC complex recruits the CENPA-CAD (nucleosome distal) complex and may be involved in incorporation of newly synthesized CENPA into centromeres. Part of a nucleosome-associated complex that binds specifically to histone H3-containing nucleosomes at the centromere, as opposed to nucleosomes containing CENPA. Component of the heterotetrameric CENP-T-W-S-X complex that binds and supercoils DNA, and plays an important role in kinetochore assembly. CENPT has a fundamental role in kinetochore assembly and function. It is one of the inner kinetochore proteins, with most further proteins binding downstream. Required for normal chromosome organization and normal progress through mitosis. The protein is Centromere protein T (CENPT) of Gallus gallus (Chicken).